The following is a 308-amino-acid chain: Methionyl-tRNA formyltransferase (308 aa).

107–110 contributes to the (6S)-5,6,7,8-tetrahydrofolate binding site; it reads SLLP.

This sequence belongs to the Fmt family.

The catalysed reaction is L-methionyl-tRNA(fMet) + (6R)-10-formyltetrahydrofolate = N-formyl-L-methionyl-tRNA(fMet) + (6S)-5,6,7,8-tetrahydrofolate + H(+). Its function is as follows. Attaches a formyl group to the free amino group of methionyl-tRNA(fMet). The formyl group appears to play a dual role in the initiator identity of N-formylmethionyl-tRNA by promoting its recognition by IF2 and preventing the misappropriation of this tRNA by the elongation apparatus. The polypeptide is Methionyl-tRNA formyltransferase (Carboxydothermus hydrogenoformans (strain ATCC BAA-161 / DSM 6008 / Z-2901)).